The following is a 292-amino-acid chain: Poly(U)-specific endoribonuclease-B (292 aa).

One can recognise an EndoU domain in the interval 8–285 (VNHELSKLFN…IGTAYPALLS (278 aa)). Active-site residues include His162, His178, and Lys224.

It belongs to the ENDOU family. Monomer. Requires Mn(2+) as cofactor.

Its subcellular location is the nucleus. The enzyme catalyses uridylyl-uridylyl-ribonucleotide-RNA = a 3'-end uridylyl-2',3'-cyclophospho-uridine-RNA + a 5'-end dephospho-ribonucleoside-RNA. Poly(U)-specific endoribonuclease involved in the processing of intron-encoded box C/D snoRNAs, such as U16 and U86. Releases products that have 2',3'-cyclic phosphate termini at the 3'-end. The chain is Poly(U)-specific endoribonuclease-B (endou-b) from Xenopus laevis (African clawed frog).